Consider the following 122-residue polypeptide: UPF0102 protein Cgl2031/cg2228 (122 aa).

It belongs to the UPF0102 family.

The protein is UPF0102 protein Cgl2031/cg2228 of Corynebacterium glutamicum (strain ATCC 13032 / DSM 20300 / JCM 1318 / BCRC 11384 / CCUG 27702 / LMG 3730 / NBRC 12168 / NCIMB 10025 / NRRL B-2784 / 534).